The sequence spans 64 residues: Large ribosomal subunit protein eL24 (64 aa).

Positions 6, 9, 32, and 36 each coordinate Zn(2+). A C4-type zinc finger spans residues 6 to 36; it reads CNFCGKSIEPGTGKKFVKKDGSVMFICSSKC.

Belongs to the eukaryotic ribosomal protein eL24 family. As to quaternary structure, part of the 50S ribosomal subunit. Forms a cluster with proteins L3 and L14. Requires Zn(2+) as cofactor.

In terms of biological role, binds to the 23S rRNA. This is Large ribosomal subunit protein eL24 from Methanococcus aeolicus (strain ATCC BAA-1280 / DSM 17508 / OCM 812 / Nankai-3).